The primary structure comprises 96 residues: Small ribosomal subunit protein bS18 (96 aa).

This sequence belongs to the bacterial ribosomal protein bS18 family. As to quaternary structure, part of the 30S ribosomal subunit. Forms a tight heterodimer with protein bS6.

Its function is as follows. Binds as a heterodimer with protein bS6 to the central domain of the 16S rRNA, where it helps stabilize the platform of the 30S subunit. The chain is Small ribosomal subunit protein bS18 from Borreliella burgdorferi (strain ATCC 35210 / DSM 4680 / CIP 102532 / B31) (Borrelia burgdorferi).